We begin with the raw amino-acid sequence, 58 residues long: Mesomartoxin (58 aa).

The signal sequence occupies residues 1 to 29 (MMSRLSVFILIALVLSVIIDVLNNSKVEG). Intrachain disulfides connect Cys-31–Cys-49, Cys-35–Cys-54, and Cys-39–Cys-56.

Belongs to the short scorpion toxin superfamily. Potassium channel inhibitor family. Alpha-KTx 26 subfamily. Expressed by the venom gland.

It localises to the secreted. Its function is as follows. Recombinant toxin that reversibly blocks the voltage-gated potassium channels Shaker (IC(50)=0.054 nM), rKv1.2/KCNA2 (IC(50)=15.6 nM), and rKv1.3/KCNA3 (IC(50)=12.5 uM). This is Mesomartoxin from Olivierus martensii (Manchurian scorpion).